The chain runs to 174 residues: Membrane protein NfeD2 (174 aa).

Transmembrane regions (helical) follow at residues 16 to 36 (LIIA…FSGL), 47 to 67 (LVLS…LVLP), and 72 to 92 (LIAL…HIFV).

It belongs to the NfeD family.

It is found in the cell membrane. The protein resides in the membrane raft. Plays a role in assembly of FloT membrane rafts, probably recruited to rafts by FloT. This Bacillus subtilis (strain 168) protein is Membrane protein NfeD2.